Here is a 289-residue protein sequence, read N- to C-terminus: MGNQVKTAALLAALSGLLIAISYWVIGGSSGLIIGIGLAAVTNLFSWYQSDKIALAVYQAQPVSEGEAPGLYRMVQRLSDRANIPMPRVYIVPSQGANAFATGRDPEHAAVAVTEGILNILPDDELEGVIAHELTHIINRDTLTQAVAATVAGAISFLAQMVSYSLWFGGGSRDDNRGANPLGVLLTVMLAPLAATIIQLAISRTREFSADAGSARLTGNPRALARALQRLEALAKQIPLNANPAFEPLLIINSISGQFLGNLFSSHPATEARVAALLKLEQQLPTKAY.

Transmembrane regions (helical) follow at residues 7-26 (TAAL…YWVI) and 31-48 (GLII…FSWY). Zn(2+) is bound at residue H132. Residue E133 is part of the active site. H136 provides a ligand contact to Zn(2+). 2 helical membrane-spanning segments follow: residues 151–171 (VAGA…FGGG) and 182–202 (LGVL…QLAI). E207 serves as a coordination point for Zn(2+).

It belongs to the peptidase M48B family. Zn(2+) serves as cofactor.

The protein localises to the cell inner membrane. This Nostoc punctiforme (strain ATCC 29133 / PCC 73102) protein is Protease HtpX homolog.